The sequence spans 470 residues: Cyclin-B1-3 (470 aa).

It belongs to the cyclin family. Cyclin AB subfamily.

In Oryza sativa subsp. japonica (Rice), this protein is Cyclin-B1-3 (CYCB1-3).